The following is a 385-amino-acid chain: MKDSFLFTSESVTEGHPDKMADQISDAVLDYIIERDQKAKVACETLVSNGFCMITGELKTSVYAPMQEIAREVVKKIGYTDALYGFDYRSAAVLNGIGEQSPDINQGVDREDGEIGAGDQGLMFGYACKETETLMPLPIHLAHQLAFALAQKRKDNTLPFLRPDGKSQVSVHYENNKPVSIDTIVISTQHSPEVSQKHLKEAVIEEIVYKVLPKEYLHDNIKFFVNPTGKFVIGGPQGDAGLTGRKIIVDTYGGSCPHGGGAFSGKDPSKVDRSAAYAARYVAKNLVASGVCDKATVQLAYAIGVIEPVSIYVNTHNTSKYSSVELEKCVKAVFKLTPKGIIESLDLLRPIYSLTSAYGHFGRELEEFTWEKTNKDEEIKAFFKR.

Residue histidine 16 participates in ATP binding. Aspartate 18 lines the Mg(2+) pocket. Glutamate 44 lines the K(+) pocket. 2 residues coordinate L-methionine: glutamate 57 and glutamine 100. The interval 100–110 (QSPDINQGVDR) is flexible loop. ATP-binding positions include 164–166 (DGK), 230–231 (KF), aspartate 239, 245–246 (RK), alanine 262, and lysine 266. Aspartate 239 contributes to the L-methionine binding site. Lysine 270 provides a ligand contact to L-methionine.

It belongs to the AdoMet synthase family. As to quaternary structure, homotetramer; dimer of dimers. The cofactor is Mg(2+). K(+) is required as a cofactor.

It is found in the cytoplasm. The catalysed reaction is L-methionine + ATP + H2O = S-adenosyl-L-methionine + phosphate + diphosphate. The protein operates within amino-acid biosynthesis; S-adenosyl-L-methionine biosynthesis; S-adenosyl-L-methionine from L-methionine: step 1/1. In terms of biological role, catalyzes the formation of S-adenosylmethionine (AdoMet) from methionine and ATP. The overall synthetic reaction is composed of two sequential steps, AdoMet formation and the subsequent tripolyphosphate hydrolysis which occurs prior to release of AdoMet from the enzyme. The sequence is that of S-adenosylmethionine synthase from Helicobacter pylori (strain HPAG1).